Here is a 365-residue protein sequence, read N- to C-terminus: UDP-N-acetylglucosamine--N-acetylmuramyl-(pentapeptide) pyrophosphoryl-undecaprenol N-acetylglucosamine transferase (365 aa).

Residues 11–13 (TGG), asparagine 124, arginine 165, serine 192, isoleucine 246, and glutamine 291 contribute to the UDP-N-acetyl-alpha-D-glucosamine site.

Belongs to the glycosyltransferase 28 family. MurG subfamily.

It is found in the cell inner membrane. It carries out the reaction di-trans,octa-cis-undecaprenyl diphospho-N-acetyl-alpha-D-muramoyl-L-alanyl-D-glutamyl-meso-2,6-diaminopimeloyl-D-alanyl-D-alanine + UDP-N-acetyl-alpha-D-glucosamine = di-trans,octa-cis-undecaprenyl diphospho-[N-acetyl-alpha-D-glucosaminyl-(1-&gt;4)]-N-acetyl-alpha-D-muramoyl-L-alanyl-D-glutamyl-meso-2,6-diaminopimeloyl-D-alanyl-D-alanine + UDP + H(+). Its pathway is cell wall biogenesis; peptidoglycan biosynthesis. In terms of biological role, cell wall formation. Catalyzes the transfer of a GlcNAc subunit on undecaprenyl-pyrophosphoryl-MurNAc-pentapeptide (lipid intermediate I) to form undecaprenyl-pyrophosphoryl-MurNAc-(pentapeptide)GlcNAc (lipid intermediate II). The chain is UDP-N-acetylglucosamine--N-acetylmuramyl-(pentapeptide) pyrophosphoryl-undecaprenol N-acetylglucosamine transferase from Nitratidesulfovibrio vulgaris (strain ATCC 29579 / DSM 644 / CCUG 34227 / NCIMB 8303 / VKM B-1760 / Hildenborough) (Desulfovibrio vulgaris).